A 121-amino-acid chain; its full sequence is Large ribosomal subunit protein uL14 (121 aa).

This sequence belongs to the universal ribosomal protein uL14 family. Part of the 50S ribosomal subunit. Forms a cluster with proteins L3 and L19. In the 70S ribosome, L14 and L19 interact and together make contacts with the 16S rRNA in bridges B5 and B8.

Functionally, binds to 23S rRNA. Forms part of two intersubunit bridges in the 70S ribosome. The protein is Large ribosomal subunit protein uL14 of Hydrogenobaculum sp. (strain Y04AAS1).